A 315-amino-acid chain; its full sequence is Adenine deaminase (315 aa).

Positions 14, 16, and 194 each coordinate Zn(2+). Glu197 (proton donor) is an active-site residue. Asp275 serves as a coordination point for Zn(2+). Asp276 provides a ligand contact to substrate.

It belongs to the metallo-dependent hydrolases superfamily. Adenosine and AMP deaminases family. Adenine deaminase type 2 subfamily. Requires Zn(2+) as cofactor.

It carries out the reaction adenine + H2O + H(+) = hypoxanthine + NH4(+). Catalyzes the hydrolytic deamination of adenine to hypoxanthine. Plays an important role in the purine salvage pathway and in nitrogen catabolism. The protein is Adenine deaminase of Pseudomonas putida (strain GB-1).